A 243-amino-acid polypeptide reads, in one-letter code: Juxtaposed with another zinc finger protein 1 (243 aa).

Residues 12-37 form a C2H2-type 1 zinc finger; it reads NTCRFGGCGLHFPTLADLIEHIEDNH. The required for interaction with NR2C2 stretch occupies residues 39-79; sequence DTDPRVLEKQELQQPTYVALSYINRFMTDAARREQESLKKK. Over residues 89–108 the composition is skewed to polar residues; it reads SSSVSRGNVSTPPRHSSGSL. The disordered stretch occupies residues 89–151; the sequence is SSSVSRGNVS…SDSDESWTTE (63 aa). A phosphothreonine mark is found at Thr109 and Thr113. A compositionally biased stretch (low complexity) spans 118–130; the sequence is PSSSFRSSTPTGS. Acidic residues predominate over residues 131–148; the sequence is EYDEEEVDYEESDSDESW. The C2H2-type 2 zinc finger occupies 173–198; that stretch reads FACPVPGCKKRYKNVNGIKYHAKNGH. The C2H2-type 3; degenerate zinc finger occupies 208–230; sequence FKCRCGKSYKTAQGLRHHTINFH.

In terms of assembly, interacts with NR2C2 (via ligand-binding region). In terms of tissue distribution, expressed in range of tissues with highest expression levels in testis, liver, muscle and fat and lowest levels in kidney. Detected in liver and white adipose tissue (at protein level).

The protein localises to the nucleus. Functionally, acts as a transcriptional corepressor of orphan nuclear receptor NR2C2. Inhibits expression of the gluconeogenesis enzyme PCK2 through inhibition of NR2C2 activity. Also involved in transcriptional activation of NAMPT by promoting expression of PPARA and PPARD. Plays a role in lipid metabolism by suppressing lipogenesis, increasing lipolysis and decreasing lipid accumulation in adipose tissue. Plays a role in glucose homeostasis by improving glucose metabolism and insulin sensitivity. In Mus musculus (Mouse), this protein is Juxtaposed with another zinc finger protein 1 (Jazf1).